A 365-amino-acid polypeptide reads, in one-letter code: Histidinol-phosphate aminotransferase 2 (365 aa).

Lys-222 is modified (N6-(pyridoxal phosphate)lysine).

It belongs to the class-II pyridoxal-phosphate-dependent aminotransferase family. Histidinol-phosphate aminotransferase subfamily. Homodimer. Pyridoxal 5'-phosphate serves as cofactor.

The catalysed reaction is L-histidinol phosphate + 2-oxoglutarate = 3-(imidazol-4-yl)-2-oxopropyl phosphate + L-glutamate. It participates in amino-acid biosynthesis; L-histidine biosynthesis; L-histidine from 5-phospho-alpha-D-ribose 1-diphosphate: step 7/9. The polypeptide is Histidinol-phosphate aminotransferase 2 (hisC2) (Bordetella bronchiseptica (strain ATCC BAA-588 / NCTC 13252 / RB50) (Alcaligenes bronchisepticus)).